The chain runs to 318 residues: Ribosomal RNA small subunit methyltransferase H (318 aa).

S-adenosyl-L-methionine contacts are provided by residues 38–40 (AGH), Asp-57, Leu-91, Asp-105, and Gln-112.

This sequence belongs to the methyltransferase superfamily. RsmH family.

It localises to the cytoplasm. It catalyses the reaction cytidine(1402) in 16S rRNA + S-adenosyl-L-methionine = N(4)-methylcytidine(1402) in 16S rRNA + S-adenosyl-L-homocysteine + H(+). In terms of biological role, specifically methylates the N4 position of cytidine in position 1402 (C1402) of 16S rRNA. This Clavibacter sepedonicus (Clavibacter michiganensis subsp. sepedonicus) protein is Ribosomal RNA small subunit methyltransferase H.